Here is a 259-residue protein sequence, read N- to C-terminus: Proteasome subunit alpha (259 aa).

The disordered stretch occupies residues 222–259 (RITGPALEQLIPAEPAPASEPAPESKPDTETKPADPQD). Residues 244–259 (PESKPDTETKPADPQD) show a composition bias toward basic and acidic residues.

It belongs to the peptidase T1A family. As to quaternary structure, the 20S proteasome core is composed of 14 alpha and 14 beta subunits that assemble into four stacked heptameric rings, resulting in a barrel-shaped structure. The two inner rings, each composed of seven catalytic beta subunits, are sandwiched by two outer rings, each composed of seven alpha subunits. The catalytic chamber with the active sites is on the inside of the barrel. Has a gated structure, the ends of the cylinder being occluded by the N-termini of the alpha-subunits. Is capped by the proteasome-associated ATPase, ARC.

It is found in the cytoplasm. The protein operates within protein degradation; proteasomal Pup-dependent pathway. The formation of the proteasomal ATPase ARC-20S proteasome complex, likely via the docking of the C-termini of ARC into the intersubunit pockets in the alpha-rings, may trigger opening of the gate for substrate entry. Interconversion between the open-gate and close-gate conformations leads to a dynamic regulation of the 20S proteasome proteolysis activity. In terms of biological role, component of the proteasome core, a large protease complex with broad specificity involved in protein degradation. The sequence is that of Proteasome subunit alpha from Rhodococcus jostii (strain RHA1).